Reading from the N-terminus, the 157-residue chain is Cyclic pyranopterin monophosphate synthase (157 aa).

Residues 74-76 (MCH) and 112-113 (ME) each bind substrate. The active site involves aspartate 127.

This sequence belongs to the MoaC family. As to quaternary structure, homohexamer; trimer of dimers.

It carries out the reaction (8S)-3',8-cyclo-7,8-dihydroguanosine 5'-triphosphate = cyclic pyranopterin phosphate + diphosphate. The protein operates within cofactor biosynthesis; molybdopterin biosynthesis. Its function is as follows. Catalyzes the conversion of (8S)-3',8-cyclo-7,8-dihydroguanosine 5'-triphosphate to cyclic pyranopterin monophosphate (cPMP). In Campylobacter jejuni subsp. jejuni serotype O:2 (strain ATCC 700819 / NCTC 11168), this protein is Cyclic pyranopterin monophosphate synthase.